Here is a 230-residue protein sequence, read N- to C-terminus: Dephospho-CoA kinase (230 aa).

The 204-residue stretch at 3 to 206 (LVGLTGGIAS…EPLTWKERLR (204 aa)) folds into the DPCK domain. ATP is bound at residue 8 to 15 (GGIASGKS).

This sequence belongs to the CoaE family.

The enzyme catalyses 3'-dephospho-CoA + ATP = ADP + CoA + H(+). The protein operates within cofactor biosynthesis; coenzyme A biosynthesis; CoA from (R)-pantothenate: step 5/5. Catalyzes the phosphorylation of the 3'-hydroxyl group of dephosphocoenzyme A to form coenzyme A. The protein is Dephospho-CoA kinase of Oryza sativa subsp. japonica (Rice).